Consider the following 263-residue polypeptide: Zinc import ATP-binding protein ZnuC (263 aa).

An ABC transporter domain is found at V11–Q226. G43–S50 serves as a coordination point for ATP.

Belongs to the ABC transporter superfamily. Zinc importer (TC 3.A.1.15.5) family. The complex is composed of two ATP-binding proteins (ZnuC), two transmembrane proteins (ZnuB) and a solute-binding protein (ZnuA).

It is found in the cell inner membrane. The catalysed reaction is Zn(2+)(out) + ATP(in) + H2O(in) = Zn(2+)(in) + ADP(in) + phosphate(in) + H(+)(in). Functionally, part of the ABC transporter complex ZnuABC involved in zinc import. Responsible for energy coupling to the transport system. This is Zinc import ATP-binding protein ZnuC from Pasteurella multocida (strain Pm70).